An 819-amino-acid polypeptide reads, in one-letter code: Kinesin-like protein KIN-13A (819 aa).

Residues 150–178 (EPFEPSPFIPKEMDEDDDDMLPGSQPGPS) form a disordered region. The Kinesin motor domain occupies 199–535 (KIKVVVRKRP…LRYADRVKSL (337 aa)). 289-296 (GQTGSGKT) is a binding site for ATP. Positions 534–729 (SLSKGSNTRK…QSEKESSCDD (196 aa)) are disordered. Residues 550-562 (TIPSSKDSSSAPS) show a composition bias toward low complexity. Basic and acidic residues-rich tracts occupy residues 577–589 (QEKR…RKAA) and 614–631 (RGKE…ERVD). Residues 632-652 (LNSSRISYNSKPQSVQSSANL) show a composition bias toward polar residues. Basic and acidic residues predominate over residues 669–686 (YRDDKPERQSNYAKKDSG). Residues 697–719 (QQAKQLQQQQRPTSASASQNSSR) are compositionally biased toward low complexity. Positions 736 to 767 (LEEEEALIAAHRKEIENTMEIVREEMNLLAEV) form a coiled coil.

This sequence belongs to the TRAFAC class myosin-kinesin ATPase superfamily. Kinesin family. KIN-13 subfamily. Ubiquitous.

Its subcellular location is the microsome. This is Kinesin-like protein KIN-13A from Oryza sativa subsp. japonica (Rice).